Consider the following 268-residue polypeptide: Ribosomal RNA small subunit methyltransferase A (268 aa).

S-adenosyl-L-methionine is bound by residues asparagine 21, leucine 23, glycine 48, glutamate 69, aspartate 94, and asparagine 115.

Belongs to the class I-like SAM-binding methyltransferase superfamily. rRNA adenine N(6)-methyltransferase family. RsmA subfamily.

It localises to the cytoplasm. The enzyme catalyses adenosine(1518)/adenosine(1519) in 16S rRNA + 4 S-adenosyl-L-methionine = N(6)-dimethyladenosine(1518)/N(6)-dimethyladenosine(1519) in 16S rRNA + 4 S-adenosyl-L-homocysteine + 4 H(+). In terms of biological role, specifically dimethylates two adjacent adenosines (A1518 and A1519) in the loop of a conserved hairpin near the 3'-end of 16S rRNA in the 30S particle. May play a critical role in biogenesis of 30S subunits. In Saccharophagus degradans (strain 2-40 / ATCC 43961 / DSM 17024), this protein is Ribosomal RNA small subunit methyltransferase A.